The following is a 123-amino-acid chain: Large ribosomal subunit protein uL18 (123 aa).

Belongs to the universal ribosomal protein uL18 family. In terms of assembly, part of the 50S ribosomal subunit; part of the 5S rRNA/L5/L18/L25 subcomplex. Contacts the 5S and 23S rRNAs.

This is one of the proteins that bind and probably mediate the attachment of the 5S RNA into the large ribosomal subunit, where it forms part of the central protuberance. This chain is Large ribosomal subunit protein uL18, found in Bifidobacterium adolescentis (strain ATCC 15703 / DSM 20083 / NCTC 11814 / E194a).